A 398-amino-acid chain; its full sequence is Alpha-2,8-sialyltransferase 8F (398 aa).

The Cytoplasmic portion of the chain corresponds to 1 to 3 (MRP). A helical; Signal-anchor for type II membrane protein transmembrane segment spans residues 4–24 (GGALLALLASLLLLLLLRLLW). Over 25–398 (CPADAPGRAR…KLQFSKCEVA (374 aa)) the chain is Lumenal. N-linked (GlcNAc...) asparagine glycosylation is found at Asn-66, Asn-93, Asn-151, and Asn-196. 2 cysteine pairs are disulfide-bonded: Cys-186/Cys-335 and Cys-200/Cys-395. Substrate contacts are provided by residues Asn-214, 236-238 (NPS), and 322-324 (STG). The Proton donor/acceptor role is filled by His-370.

This sequence belongs to the glycosyltransferase 29 family.

The protein resides in the golgi apparatus membrane. The enzyme catalyses a ganglioside GM3 + CMP-N-acetyl-beta-neuraminate = a ganglioside GD3 + CMP + H(+). It carries out the reaction a ganglioside GM3 (d18:1(4E)) + CMP-N-acetyl-beta-neuraminate = a ganglioside GD3 (d18:1(4E)) + CMP + H(+). It catalyses the reaction a ganglioside GD1a (d18:1(4E)) + CMP-N-acetyl-beta-neuraminate = a ganglioside GT1a (d18:1(4E)) + CMP + H(+). The catalysed reaction is a ganglioside GD1a + CMP-N-acetyl-beta-neuraminate = a ganglioside GT1a + CMP + H(+). The enzyme catalyses a ganglioside GM1b (d18:1(4E)) + CMP-N-acetyl-beta-neuraminate = a ganglioside GD1c (d18:1(4E)) + CMP + H(+). It carries out the reaction a ganglioside GM1b + CMP-N-acetyl-beta-neuraminate = a ganglioside GD1c + CMP + H(+). It catalyses the reaction a ganglioside GM4 (d18:1(4E)) + CMP-N-acetyl-beta-neuraminate = an N-acetyl-alpha-neuraminosyl-(2-&gt;8)-N-acetyl-alpha-neuraminosyl-(2-&gt;3)-beta-D-galactosyl-(1&lt;-&gt;1')-N-acylsphing-4-enine + CMP + H(+). The catalysed reaction is N-acetyl-alpha-neuraminosyl-(2-&gt;3)-beta-D-galactosyl-(1&lt;-&gt;1')-ceramide + CMP-N-acetyl-beta-neuraminate = N-acetyl-alpha-neuraminosyl-(2-&gt;8)-N-acetyl-alpha-neuraminosyl-(2-&gt;3)-beta-D-galactosyl-(1&lt;-&gt;1')-ceramide + CMP + H(+). The enzyme catalyses a ganglioside GT1b (d18:1(4E)) + CMP-N-acetyl-beta-neuraminate = a ganglioside GQ1b (d18:1(4E)) + CMP + H(+). It carries out the reaction a ganglioside GT1b + CMP-N-acetyl-beta-neuraminate = a ganglioside GQ1b + CMP + H(+). Its pathway is protein modification; protein glycosylation. In terms of biological role, alpha-2,8-sialyltransferase that prefers O-glycans to N-glycans or glycolipids as acceptor substrates. The minimal acceptor substrate is the NeuAc-alpha-2,3(6)-Gal sequence at the non-reducing end of their carbohydrate groups. This Homo sapiens (Human) protein is Alpha-2,8-sialyltransferase 8F.